Reading from the N-terminus, the 427-residue chain is Serine--tRNA ligase (427 aa).

230-232 (TSE) provides a ligand contact to L-serine. 261–263 (RSE) is a binding site for ATP. Residue Glu-284 participates in L-serine binding. 348–351 (EISS) provides a ligand contact to ATP. L-serine is bound at residue Ser-384.

This sequence belongs to the class-II aminoacyl-tRNA synthetase family. Type-1 seryl-tRNA synthetase subfamily. Homodimer. The tRNA molecule binds across the dimer.

It localises to the cytoplasm. It catalyses the reaction tRNA(Ser) + L-serine + ATP = L-seryl-tRNA(Ser) + AMP + diphosphate + H(+). The catalysed reaction is tRNA(Sec) + L-serine + ATP = L-seryl-tRNA(Sec) + AMP + diphosphate + H(+). Its pathway is aminoacyl-tRNA biosynthesis; selenocysteinyl-tRNA(Sec) biosynthesis; L-seryl-tRNA(Sec) from L-serine and tRNA(Sec): step 1/1. Its function is as follows. Catalyzes the attachment of serine to tRNA(Ser). Is also able to aminoacylate tRNA(Sec) with serine, to form the misacylated tRNA L-seryl-tRNA(Sec), which will be further converted into selenocysteinyl-tRNA(Sec). This is Serine--tRNA ligase from Desulforapulum autotrophicum (strain ATCC 43914 / DSM 3382 / VKM B-1955 / HRM2) (Desulfobacterium autotrophicum).